The sequence spans 115 residues: Large ribosomal subunit protein bL19 (115 aa).

It belongs to the bacterial ribosomal protein bL19 family.

Its function is as follows. This protein is located at the 30S-50S ribosomal subunit interface and may play a role in the structure and function of the aminoacyl-tRNA binding site. In Baumannia cicadellinicola subsp. Homalodisca coagulata, this protein is Large ribosomal subunit protein bL19.